The sequence spans 557 residues: Protein Red (557 aa).

The tract at residues Met1–Leu84 is disordered. Positions Asp16–Ser25 are enriched in basic and acidic residues. The span at Thr42–Ser53 shows a compositional bias: low complexity. N6-acetyllysine is present on residues Lys98 and Lys137. Lys151 participates in a covalent cross-link: Glycyl lysine isopeptide (Lys-Gly) (interchain with G-Cter in SUMO2). The disordered stretch occupies residues Lys181–Lys205. Phosphoserine is present on Ser287. Basic residues predominate over residues Arg294–Lys303. Residues Arg294–Ser402 form a disordered region. The span at Gly304–Glu313 shows a compositional bias: basic and acidic residues. Glycyl lysine isopeptide (Lys-Gly) (interchain with G-Cter in SUMO2) cross-links involve residues Lys310 and Lys331. Basic and acidic residues predominate over residues Thr332 to Lys398. 17 tandem repeats follow at residues Arg342 to Glu343, Arg344 to Glu345, Arg346 to Asp347, Arg348 to Glu349, Arg350 to Asp351, Arg352 to Asp353, Arg354 to Asp355, Arg356 to Glu357, Arg358 to Glu359, Arg360 to Glu361, Arg362 to Asp363, Arg364 to Glu365, Arg366 to Glu367, Arg368 to Glu369, Arg370 to Asp371, Arg372 to Glu373, and Arg374 to Glu375. A 17 X 2 AA tandem repeats of R-[ED] region spans residues Arg342–Glu375. Residues Lys386, Lys388, Lys404, and Lys408 each participate in a glycyl lysine isopeptide (Lys-Gly) (interchain with G-Cter in SUMO2) cross-link. Phosphoserine is present on residues Ser417 and Ser460. Thr485 bears the Phosphothreonine mark. Residues Lys496, Lys501, and Lys509 each participate in a glycyl lysine isopeptide (Lys-Gly) (interchain with G-Cter in SUMO2) cross-link. Ser536 carries the post-translational modification Phosphoserine. Glycyl lysine isopeptide (Lys-Gly) (interchain with G-Cter in SUMO2) cross-links involve residues Lys541, Lys543, Lys544, and Lys553.

The protein belongs to the RED family. As to quaternary structure, component of the spliceosome B complex. Interacts with SMU1. Interacts with MAD1L1. May interact with DHX15.

It localises to the nucleus. The protein resides in the nucleoplasm. Its subcellular location is the chromosome. The protein localises to the cytoplasm. It is found in the cytoskeleton. It localises to the spindle pole. In terms of biological role, involved in pre-mRNA splicing as a component of the spliceosome. Auxiliary spliceosomal protein that regulates selection of alternative splice sites in a small set of target pre-mRNA species. Required for normal mitotic cell cycle progression. Recruits MAD1L1 and MAD2L1 to kinetochores, and is required to trigger the spindle assembly checkpoint. Required for normal accumulation of SMU1. This Pongo abelii (Sumatran orangutan) protein is Protein Red (IK).